Here is a 1182-residue protein sequence, read N- to C-terminus: uncharacterized protein (1182 aa).

A helical membrane pass occupies residues 618 to 638 (GSSSLVCSVMVVIFSIILYYL).

It localises to the host membrane. This is an uncharacterized protein from Callospermophilus lateralis (Golden-mantled ground squirrel).